The chain runs to 470 residues: Cysteine--tRNA ligase (470 aa).

A Zn(2+)-binding site is contributed by Cys30. The 'HIGH' region signature appears at Pro32 to Asn42. Cys211, His236, and Glu240 together coordinate Zn(2+). A 'KMSKS' region motif is present at residues Lys268 to Ser272. Lys271 is an ATP binding site.

It belongs to the class-I aminoacyl-tRNA synthetase family. Monomer. Requires Zn(2+) as cofactor.

The protein localises to the cytoplasm. The catalysed reaction is tRNA(Cys) + L-cysteine + ATP = L-cysteinyl-tRNA(Cys) + AMP + diphosphate. The protein is Cysteine--tRNA ligase of Fervidobacterium nodosum (strain ATCC 35602 / DSM 5306 / Rt17-B1).